Here is a 256-residue protein sequence, read N- to C-terminus: 5-oxoprolinase subunit A (256 aa).

Belongs to the LamB/PxpA family. In terms of assembly, forms a complex composed of PxpA, PxpB and PxpC.

The catalysed reaction is 5-oxo-L-proline + ATP + 2 H2O = L-glutamate + ADP + phosphate + H(+). In terms of biological role, catalyzes the cleavage of 5-oxoproline to form L-glutamate coupled to the hydrolysis of ATP to ADP and inorganic phosphate. The polypeptide is 5-oxoprolinase subunit A (Geobacillus thermodenitrificans (strain NG80-2)).